The following is a 397-amino-acid chain: Acetate kinase 2 (397 aa).

Asn8 serves as a coordination point for Mg(2+). Lys15 is an ATP binding site. Residue Arg89 coordinates substrate. Asp146 (proton donor/acceptor) is an active-site residue. Residues 206 to 210, 281 to 283, and 329 to 333 each bind ATP; these read HLGNG, DLR, and GIGEN. Glu382 contributes to the Mg(2+) binding site.

The protein belongs to the acetokinase family. As to quaternary structure, homodimer. It depends on Mg(2+) as a cofactor. Mn(2+) serves as cofactor.

Its subcellular location is the cytoplasm. The enzyme catalyses acetate + ATP = acetyl phosphate + ADP. It functions in the pathway metabolic intermediate biosynthesis; acetyl-CoA biosynthesis; acetyl-CoA from acetate: step 1/2. Its function is as follows. Catalyzes the formation of acetyl phosphate from acetate and ATP. Can also catalyze the reverse reaction. This chain is Acetate kinase 2, found in Listeria monocytogenes serotype 4b (strain F2365).